A 135-amino-acid chain; its full sequence is Large ribosomal subunit protein mL41B (135 aa).

The N-terminal 13 residues, 1 to 13 (MGLITKIARGLVR), are a transit peptide targeting the mitochondrion.

The protein belongs to the mitochondrion-specific ribosomal protein mL41 family. In terms of assembly, component of the mitochondrial ribosome large subunit (39S) which comprises a 16S rRNA and about 50 distinct proteins.

Its subcellular location is the mitochondrion. Functionally, component of the mitochondrial ribosome large subunit. Also involved in apoptosis and cell cycle. This is Large ribosomal subunit protein mL41B (mrpl41-b) from Xenopus laevis (African clawed frog).